We begin with the raw amino-acid sequence, 499 residues long: Aspartyl/glutamyl-tRNA(Asn/Gln) amidotransferase subunit B (499 aa).

It belongs to the GatB/GatE family. GatB subfamily. In terms of assembly, heterotrimer of A, B and C subunits.

It carries out the reaction L-glutamyl-tRNA(Gln) + L-glutamine + ATP + H2O = L-glutaminyl-tRNA(Gln) + L-glutamate + ADP + phosphate + H(+). The catalysed reaction is L-aspartyl-tRNA(Asn) + L-glutamine + ATP + H2O = L-asparaginyl-tRNA(Asn) + L-glutamate + ADP + phosphate + 2 H(+). Its function is as follows. Allows the formation of correctly charged Asn-tRNA(Asn) or Gln-tRNA(Gln) through the transamidation of misacylated Asp-tRNA(Asn) or Glu-tRNA(Gln) in organisms which lack either or both of asparaginyl-tRNA or glutaminyl-tRNA synthetases. The reaction takes place in the presence of glutamine and ATP through an activated phospho-Asp-tRNA(Asn) or phospho-Glu-tRNA(Gln). This is Aspartyl/glutamyl-tRNA(Asn/Gln) amidotransferase subunit B from Bartonella tribocorum (strain CIP 105476 / IBS 506).